We begin with the raw amino-acid sequence, 641 residues long: Homeobox protein ceh-38 (641 aa).

2 stretches are compositionally biased toward polar residues: residues 1–14 (MESS…TNGT) and 28–38 (DPSSTFINNTG). 2 disordered regions span residues 1–79 (MESS…TSSA) and 129–244 (LHVD…GDRM). Low complexity predominate over residues 52–79 (TISPHPITPSASTSSATSATEEPATSSA). Positions 131-140 (VDSRRRESHD) are enriched in basic and acidic residues. Composition is skewed to polar residues over residues 167–183 (TPTN…SSLL) and 190–204 (NTIG…TFGS). Residues 308–394 (NAEIGDDIYI…TRLAILDMKT (87 aa)) constitute a DNA-binding region (CUT). Disordered regions lie at residues 398-428 (NRAS…PVSK), 485-508 (GGNI…VGDT), and 552-641 (FGVS…LAAN). Residues 427-486 (SKRPRLVFTDIQKRTLQAIFKETQRPSREMQQTIAEHLRLDLSTVANFFMNARRRSRLGG) constitute a DNA-binding region (homeobox). Positions 571-604 (HEDDEELDELNDSELAYEEDVEIGDEEEEDEEQA) are enriched in acidic residues. Residues 613–626 (KVEELEEKTVIKEE) show a composition bias toward basic and acidic residues.

Belongs to the CUT homeobox family. Expressed in the embryo. After gastrulation, expressed in almost all cells. During larval and adult stages, expressed in the dorsal and ventral nerve cord, head and tail neurons, pharynx, gut and head.

It localises to the nucleus. Probable DNA-binding regulatory protein involved in cell-fate specification. In Caenorhabditis elegans, this protein is Homeobox protein ceh-38 (ceh-38).